A 107-amino-acid chain; its full sequence is Heme-degrading monooxygenase (107 aa).

The region spanning valine 2 to phenylalanine 93 is the ABM domain. Residue asparagine 6 coordinates Fe cation. Histidine 76 is a binding site for heme.

It belongs to the antibiotic biosynthesis monooxygenase family. Heme-degrading monooxygenase IsdG subfamily. In terms of assembly, homodimer.

The protein localises to the cytoplasm. The catalysed reaction is heme b + 3 reduced [NADPH--hemoprotein reductase] + 3 O2 = biliverdin IXalpha + CO + Fe(2+) + 3 oxidized [NADPH--hemoprotein reductase] + 3 H2O + H(+). Functionally, allows bacterial pathogens to use the host heme as an iron source. Catalyzes the oxidative degradation of the heme macrocyclic porphyrin ring to the biliverdin in the presence of a suitable electron donor such as ascorbate or NADPH--cytochrome P450 reductase, with subsequent release of free iron. The polypeptide is Heme-degrading monooxygenase (Shouchella clausii (strain KSM-K16) (Alkalihalobacillus clausii)).